The primary structure comprises 144 residues: Large ribosomal subunit protein uL11 (144 aa).

It belongs to the universal ribosomal protein uL11 family. Part of the ribosomal stalk of the 50S ribosomal subunit. Interacts with L10 and the large rRNA to form the base of the stalk. L10 forms an elongated spine to which L12 dimers bind in a sequential fashion forming a multimeric L10(L12)X complex. In terms of processing, one or more lysine residues are methylated.

Its function is as follows. Forms part of the ribosomal stalk which helps the ribosome interact with GTP-bound translation factors. This Neisseria meningitidis serogroup B (strain ATCC BAA-335 / MC58) protein is Large ribosomal subunit protein uL11.